Consider the following 190-residue polypeptide: Vascular endothelial growth factor A (190 aa).

A signal peptide spans 1–26 (MNFLLSWVHWSLALLLYLHHAKWSQA). 3 disulfide bridges follow: Cys-51–Cys-93, Cys-82–Cys-127, and Cys-86–Cys-129. Asn-100 carries an N-linked (GlcNAc...) asparagine glycan.

This sequence belongs to the PDGF/VEGF growth factor family. As to quaternary structure, homodimer; disulfide-linked. Also found as heterodimer with PGF. Interacts with NRP1. Interacts with isoform 2 of BSG. Interacts with CD82; this interaction inhibits VEGFA-mediated signaling pathway.

It localises to the secreted. Functionally, growth factor active in angiogenesis, vasculogenesis and endothelial cell growth. Induces endothelial cell proliferation, promotes cell migration, inhibits apoptosis and induces permeabilization of blood vessels. Binds to the FLT1/VEGFR1 and KDR/VEGFR2 receptors, heparan sulfate and heparin. Binding to NRP1 receptor initiates a signaling pathway needed for motor neuron axon guidance and cell body migration, including for the caudal migration of facial motor neurons from rhombomere 4 to rhombomere 6 during embryonic development. Also binds the DEAR/FBXW7-AS1 receptor. This chain is Vascular endothelial growth factor A (VEGFA), found in Equus caballus (Horse).